The sequence spans 273 residues: Undecaprenyl-diphosphatase (273 aa).

7 helical membrane-spanning segments follow: residues 4-24, 43-63, 82-102, 108-128, 183-203, 217-237, and 248-268; these read LILLKALLLGIVEGLTEFLPI, KAKVFTVAIQLGAILAVCWEY, FVINLFIAFLPAAILGLLFIK, LFHPMPVAIALVTGGILILWA, AAEFSFFLAIPVMFAATFYDV, MFATGSVAAFISALIAIRGFI, and FAWYRIGFGLIVLLTAYSGLV.

This sequence belongs to the UppP family.

It is found in the cell inner membrane. It catalyses the reaction di-trans,octa-cis-undecaprenyl diphosphate + H2O = di-trans,octa-cis-undecaprenyl phosphate + phosphate + H(+). Catalyzes the dephosphorylation of undecaprenyl diphosphate (UPP). Confers resistance to bacitracin. The chain is Undecaprenyl-diphosphatase from Nitrosomonas europaea (strain ATCC 19718 / CIP 103999 / KCTC 2705 / NBRC 14298).